The following is a 580-amino-acid chain: Type 3 secretion system translocon protein SctE (580 aa).

2 ipgC chaperone binding domain regions span residues 15–45 and 51–72; these read KILT…IADL and INTT…APKS. A mediates interaction with human MAD2L2 region spans residues 61 to 70; sequence NILIPELKAP. A coiled-coil region spans residues 104–224; that stretch reads AWKSQQQARQ…MQLEKEIDSF (121 aa). 2 consecutive transmembrane segments (helical) span residues 313–333 and 399–419; these read ILGA…GGAS and IGSI…VVLV.

The protein belongs to the SctE/SipB/YopB family. As to quaternary structure, the core secretion machinery of the T3SS is composed of approximately 20 different proteins, including cytoplasmic components, a base, an export apparatus and a needle. This subunit is involved in the formation of a pore, called the translocon, in host membrane. Interacts with IpaC/SctB. Interacts with the needle tip protein IpaD/SctA. Interacts with the molecular chaperone IpgC, which prevents premature association with IpaC/SctB within the cytoplasm of Shigella cells and protects IpaB/SctE from proteolysis. Interacts with the host protein ICE in the cytoplasm of infected macrophages. Interacts with human MAD2L2 in the G2/M phase of the cell cycle.

It is found in the secreted. The protein resides in the host membrane. Its subcellular location is the host cell. The protein localises to the host nucleus. Interaction with the membrane is affected by the pH. IpaB/SctE is more efficient in destabilizing the membrane at pH 5.0 than at neutral pH. Its function is as follows. Component of the type III secretion system (T3SS), also called injectisome, which is used to inject bacterial effector proteins into eukaryotic host cells. IpaB/SctE and IpaC/SctB are inserted into the host membrane where they form a pore and allow the translocation of effector proteins into the cytosol of target cells. Interaction with IpaD/SctA at needle tips leads to the formation of the MxiH/SctF-IpaD/SctA-IpaB/SctE ternary complex, which is essential for host cell sensing. Interaction of IpaB/SctE with host membrane lipids promotes recruitment of IpaC/SctB at the needle tip concomitant with translocon insertion into the host membrane and type III secretion induction. In terms of biological role, required for efficient dissemination. Necessary for lysis of the two cellular membranes that surround bacteria in protrusions during cell-to-cell spread. Is sufficient to induce macrophage apoptosis through activation of the interleukin-1 beta converting enzyme (ICE) in infected macrophages. In epithelial cells, causes cell-cycle arrest by targeting host MAD2L2, an anaphase-promoting complex/cyclosome (APC) inhibitor. The chain is Type 3 secretion system translocon protein SctE from Shigella flexneri.